A 212-amino-acid chain; its full sequence is Pyrrolidone-carboxylate peptidase (212 aa).

Catalysis depends on residues Glu80, Cys143, and His165.

The protein belongs to the peptidase C15 family. Homotetramer.

It localises to the cytoplasm. It carries out the reaction Release of an N-terminal pyroglutamyl group from a polypeptide, the second amino acid generally not being Pro.. In terms of biological role, removes 5-oxoproline from various penultimate amino acid residues except L-proline. The polypeptide is Pyrrolidone-carboxylate peptidase (Vibrio vulnificus (strain CMCP6)).